We begin with the raw amino-acid sequence, 227 residues long: Phosphoribosylformylglycinamidine synthase subunit PurQ (227 aa).

Residues 3 to 225 (FAVIVLPGSN…VKNWRDTHVT (223 aa)) form the Glutamine amidotransferase type-1 domain. Cys86 acts as the Nucleophile in catalysis. Active-site residues include His194 and Glu196.

In terms of assembly, part of the FGAM synthase complex composed of 1 PurL, 1 PurQ and 2 PurS subunits.

It is found in the cytoplasm. The catalysed reaction is N(2)-formyl-N(1)-(5-phospho-beta-D-ribosyl)glycinamide + L-glutamine + ATP + H2O = 2-formamido-N(1)-(5-O-phospho-beta-D-ribosyl)acetamidine + L-glutamate + ADP + phosphate + H(+). The enzyme catalyses L-glutamine + H2O = L-glutamate + NH4(+). The protein operates within purine metabolism; IMP biosynthesis via de novo pathway; 5-amino-1-(5-phospho-D-ribosyl)imidazole from N(2)-formyl-N(1)-(5-phospho-D-ribosyl)glycinamide: step 1/2. Part of the phosphoribosylformylglycinamidine synthase complex involved in the purines biosynthetic pathway. Catalyzes the ATP-dependent conversion of formylglycinamide ribonucleotide (FGAR) and glutamine to yield formylglycinamidine ribonucleotide (FGAM) and glutamate. The FGAM synthase complex is composed of three subunits. PurQ produces an ammonia molecule by converting glutamine to glutamate. PurL transfers the ammonia molecule to FGAR to form FGAM in an ATP-dependent manner. PurS interacts with PurQ and PurL and is thought to assist in the transfer of the ammonia molecule from PurQ to PurL. This is Phosphoribosylformylglycinamidine synthase subunit PurQ from Bacillus pumilus (strain SAFR-032).